The chain runs to 151 residues: MEYSNLRRQIIFMKKNLFDQGYLDEQFNQLEELQDESSPNFVEEVAALFFKDSSRLLTNIEQAIDKYPQDFYRLDSLVQQLKGSGSSIGALRMKNECSVFKVNCNDRNLEGCRRSLQKMKREHATLKQKLESYFQLLRQVGPRDYAVSSRK.

The 96-residue stretch at 38–133 folds into the HPt domain; sequence SPNFVEEVAA…ATLKQKLESY (96 aa).

Functions as a two-component phosphorelay mediator between cytokinin sensor histidine kinases and response regulators (B-type ARRs). Plays an important role in propagating cytokinin signal transduction. In Oryza sativa subsp. japonica (Rice), this protein is Pseudo histidine-containing phosphotransfer protein 2.